We begin with the raw amino-acid sequence, 667 residues long: Protein angel homolog 1 (667 aa).

Phosphoserine is present on residues Ser-77 and Ser-105.

The protein belongs to the CCR4/nocturin family.

The sequence is that of Protein angel homolog 1 from Mus musculus (Mouse).